The following is a 73-amino-acid chain: Small ribosomal subunit protein eS27 (73 aa).

Zn(2+) contacts are provided by Cys-28, Cys-31, Cys-47, and Cys-50. A C4-type zinc finger spans residues 28–50 (CPKCGNRQVVFSHSTFRARCLNC).

This sequence belongs to the eukaryotic ribosomal protein eS27 family. As to quaternary structure, part of the 30S ribosomal subunit. Zn(2+) serves as cofactor.

This chain is Small ribosomal subunit protein eS27, found in Aeropyrum pernix (strain ATCC 700893 / DSM 11879 / JCM 9820 / NBRC 100138 / K1).